We begin with the raw amino-acid sequence, 509 residues long: 2-isopropylmalate synthase (509 aa).

One can recognise a Pyruvate carboxyltransferase domain in the interval 5 to 267 (IQIFDTTLRD…QTALNLEETK (263 aa)). Mn(2+)-binding residues include D14, H202, H204, and N238. Residues 391–509 (KLETLQLQYV…AAENVEKVGN (119 aa)) form a regulatory domain region.

It belongs to the alpha-IPM synthase/homocitrate synthase family. LeuA type 1 subfamily. In terms of assembly, homodimer. It depends on Mn(2+) as a cofactor.

It is found in the cytoplasm. The enzyme catalyses 3-methyl-2-oxobutanoate + acetyl-CoA + H2O = (2S)-2-isopropylmalate + CoA + H(+). The protein operates within amino-acid biosynthesis; L-leucine biosynthesis; L-leucine from 3-methyl-2-oxobutanoate: step 1/4. In terms of biological role, catalyzes the condensation of the acetyl group of acetyl-CoA with 3-methyl-2-oxobutanoate (2-ketoisovalerate) to form 3-carboxy-3-hydroxy-4-methylpentanoate (2-isopropylmalate). This chain is 2-isopropylmalate synthase, found in Staphylococcus aureus (strain MRSA252).